Consider the following 2409-residue polypeptide: Reducing polyketide synthase FUB1 (2409 aa).

Residues 1–43 show a composition bias toward low complexity; the sequence is MTLSNGSNGANGTSNGHGAHPSANGFHNAANGGANNGTPNGGA. The segment at 1–49 is disordered; sequence MTLSNGSNGANGTSNGHGAHPSANGFHNAANGGANNGTPNGGAEYNASL. The Ketosynthase family 3 (KS3) domain occupies 57–479; sequence SSAIAVIGVS…GANAHAVLDD (423 aa). Residues Cys230, His365, and His403 each act as for beta-ketoacyl synthase activity in the active site. Positions 608–929 are malonyl-CoA:ACP transacylase (MAT) domain; sequence TFIFTGQGAQ…FSAIKRKQDA (322 aa). Ser699 acts as the For malonyltransferase activity in catalysis. Residues 994–1127 form an N-terminal hotdog fold region; it reads LELLGVRDPR…GLVSTSYKRE (134 aa). A PKS/mFAS DH domain is found at 994–1307; sequence LELLGVRDPR…TVPLRGASDP (314 aa). The tract at residues 995–1302 is dehydratase (DH) domain; sequence ELLGVRDPRS…LEGCKTVPLR (308 aa). Residue His1026 is the Proton acceptor; for dehydratase activity of the active site. A C-terminal hotdog fold region spans residues 1155-1307; it reads LPSVDPTVFY…TVPLRGASDP (153 aa). Residue Asp1220 is the Proton donor; for dehydratase activity of the active site. Positions 1713–2025 are enoyl reductase (ER) domain; the sequence is GLLDTLEYLS…SGGHVGKIVL (313 aa). A ketoreductase (KR) domain region spans residues 2049–2225; that stretch reads ATYVLIGGLG…AATSINLSLV (177 aa). The 78-residue stretch at 2328-2405 folds into the Carrier domain; it reads EVYEIVLQQL…GFAKKVMAKS (78 aa). Ser2365 is modified (O-(pantetheine 4'-phosphoryl)serine).

The protein operates within mycotoxin biosynthesis. In terms of biological role, reducing polyketide synthase; part of the gene cluster that mediates the biosynthesis of fusaric acid, a mycotoxin with low to moderate toxicity to animals and humans, but with high phytotoxic properties. L-aspartate is suggested as fusaric acid amino acid precursor that is activated and further processed to O-acetyl-L-homoserine by cluster enzymes aspartate kinase FUB3 and homoserine O-acetyltransferase FUB5, as well as enzymes of the primary metabolism. The polyketide synthase (PKS) FUB1 generates the triketide trans-2-hexenal which is presumptively released by the hydrolase FUB4 and linked to the NRPS-bound amino acid precursor by NAD(P)-dependent dehydrogenase FUB6. FUB1, FUB4, and the non-canonical NRPS Fub8 may form an enzyme complex. Further processing of the NRPS-bound intermediate might be carried out by FUB6 and the sulfhydrylase FUB7, enabling a spontaneous electrocyclization to close the carbon backbone of fusaric acid. Dihydrofusaric acid is likely to be released via reduction by the thioester reductase (TR) domain of FUB8 whereupon the final oxidation to fusaric acid may (also) be performed by the FMN-dependent dehydrogenase FUB9. The sequence is that of Reducing polyketide synthase FUB1 from Gibberella moniliformis (strain M3125 / FGSC 7600) (Maize ear and stalk rot fungus).